Here is a 24-residue protein sequence, read N- to C-terminus: Retinol-binding protein 3 (24 aa).

Its subcellular location is the secreted. The protein localises to the extracellular space. It is found in the extracellular matrix. It localises to the interphotoreceptor matrix. In terms of biological role, IRBP shuttles 11-cis and all trans retinoids between the retinol isomerase in the pigment epithelium and the visual pigments in the photoreceptor cells of the retina. This Ovis aries (Sheep) protein is Retinol-binding protein 3 (RBP3).